An 855-amino-acid chain; its full sequence is Pentatricopeptide repeat-containing protein At1g74750 (855 aa).

The tract at residues 21 to 40 (GSRPSAADGNSCTCAEDESG) is disordered. 8 PPR repeats span residues 358–392 (DGHT…GCKP), 393–427 (NTVT…GCEP), 428–462 (DRVT…GLSP), 463–497 (DTFT…GCTP), 498–532 (NLVT…GFQP), 533–567 (DKVT…NWVP), 568–602 (DEPV…GLRP), and 603–637 (NVPT…GLHP). Residues 755 to 838 (INLHVMSEGT…NSGCFVGSGE (84 aa)) form the Smr domain.

It belongs to the PPR family. P subfamily.

The chain is Pentatricopeptide repeat-containing protein At1g74750 from Arabidopsis thaliana (Mouse-ear cress).